The following is a 168-amino-acid chain: Endoribonuclease YbeY (168 aa).

H123, H127, and H133 together coordinate Zn(2+).

Belongs to the endoribonuclease YbeY family. Zn(2+) is required as a cofactor.

It localises to the cytoplasm. Its function is as follows. Single strand-specific metallo-endoribonuclease involved in late-stage 70S ribosome quality control and in maturation of the 3' terminus of the 16S rRNA. The protein is Endoribonuclease YbeY of Francisella tularensis subsp. holarctica (strain LVS).